Here is a 229-residue protein sequence, read N- to C-terminus: Matrix protein (229 aa).

Positions 2–4 (KSI) match the dynamin binding motif. Residues 11–36 (AKKEKKREKKSNHGSHSMEWESPPSY) form a disordered region. A compositionally biased stretch (basic residues) spans 13-23 (KEKKREKKSNH). Positions 33–36 (PPSY) match the PPXY motif motif. A PTAP/PSAP motif motif is present at residues 42 to 45 (PSAP).

Belongs to the vesiculoviruses matrix protein family. As to quaternary structure, homomultimer. Interacts with viral nucleocapsid; this interaction contributes to the virion assembly. Interacts with the viral envelope glycoprotein; this interaction contributes to the virion assembly. Interacts with host RAE1-NUP98 complex. Interacts with host NEDD4 and TSG101. Interacts with host dynamin. Interacts with host NDUFAF4; the interaction inhibits viral propagation and is independent of interferon activation. Interacts with host GTF2H5; the interaction may inhibit host transcription. In terms of processing, phosphorylated by host.

It is found in the virion. The protein resides in the host endomembrane system. Its subcellular location is the host nucleus membrane. It localises to the host nucleus. The protein localises to the host cytoplasm. Forms a double layer around the helical nucleocapsid, the inner matrix layer binding to the N helix and the outer matrix layer binding to the envelope glycoprotein. Plays a major role in assembly and budding of virion, by recruiting cellular partners of the ESCRT complexes that play a key role in releasing the budding particle from the host membrane. Condensates the ribonucleocapsid core during virus assembly. Inhibits the host mRNA nuclear export thereby inducing the shut off of cellular transcription and preventing the interferon signaling and the establishment of antiviral state in infected cells. This shutoff presumably inhibits interferon signaling and thus establishment of antiviral state in virus infected cells. Induces cell-rounding, cytoskeleton disorganization and apoptosis in infected cell. Inhibits host transcription, possibly through interaction with host DNA repair factor IIH/TFIIH GTF2H5 subunit. This Piry virus (PIRYV) protein is Matrix protein (M).